The sequence spans 342 residues: Aspartate carbamoyltransferase catalytic subunit (342 aa).

Arginine 54 and threonine 55 together coordinate carbamoyl phosphate. Residue lysine 82 coordinates L-aspartate. Positions 104, 134, and 137 each coordinate carbamoyl phosphate. 2 residues coordinate L-aspartate: arginine 177 and arginine 232. 2 residues coordinate carbamoyl phosphate: glycine 277 and proline 278.

Belongs to the aspartate/ornithine carbamoyltransferase superfamily. ATCase family. In terms of assembly, heterododecamer (2C3:3R2) of six catalytic PyrB chains organized as two trimers (C3), and six regulatory PyrI chains organized as three dimers (R2).

It carries out the reaction carbamoyl phosphate + L-aspartate = N-carbamoyl-L-aspartate + phosphate + H(+). It functions in the pathway pyrimidine metabolism; UMP biosynthesis via de novo pathway; (S)-dihydroorotate from bicarbonate: step 2/3. Functionally, catalyzes the condensation of carbamoyl phosphate and aspartate to form carbamoyl aspartate and inorganic phosphate, the committed step in the de novo pyrimidine nucleotide biosynthesis pathway. The protein is Aspartate carbamoyltransferase catalytic subunit of Pseudarthrobacter chlorophenolicus (strain ATCC 700700 / DSM 12829 / CIP 107037 / JCM 12360 / KCTC 9906 / NCIMB 13794 / A6) (Arthrobacter chlorophenolicus).